The chain runs to 321 residues: Arabinan endo-1,5-alpha-L-arabinosidase A (321 aa).

Residues 1-19 (MYSLLTALSVPLLAGLAHG) form the signal peptide. The active-site Proton acceptor is the Asp34. Residue Asn192 is glycosylated (N-linked (GlcNAc...) asparagine). The Proton donor role is filled by Glu200.

The protein belongs to the glycosyl hydrolase 43 family.

The protein resides in the secreted. It catalyses the reaction Endohydrolysis of (1-&gt;5)-alpha-arabinofuranosidic linkages in (1-&gt;5)-arabinans.. Its pathway is glycan metabolism; L-arabinan degradation. Its function is as follows. Endo-1,5-alpha-L-arabinanase involved in degradation of pectin. Its preferred substrate is linear 1,5-alpha-L-arabinan. This is Arabinan endo-1,5-alpha-L-arabinosidase A (abnA) from Aspergillus aculeatus.